Here is a 165-residue protein sequence, read N- to C-terminus: MPPKFDPNEVKFLYLRAVGGEVGASSALAPKIGPLGLSPKKVGEDIAKATKEYKGIKVTVQLRIQNRQATASVVPSASSLVITALKEPVRDRKKEKNVKHSGNIPLDEIFEIARKMQHKSFGKNLASVSKEILGTAQSVGCRVDGKNPHDIIDAINAGEIDVPEN.

This sequence belongs to the universal ribosomal protein uL11 family. In terms of assembly, component of the large ribosomal subunit. Mature ribosomes consist of a small (40S) and a large (60S) subunit. The 40S subunit contains about 32 different proteins and 1 molecule of RNA (18S). The 60S subunit contains 45 different proteins and 3 molecules of RNA (25S, 5.8S and 5S).

Its subcellular location is the cytoplasm. In terms of biological role, component of the ribosome, a large ribonucleoprotein complex responsible for the synthesis of proteins in the cell. The small ribosomal subunit (SSU) binds messenger RNAs (mRNAs) and translates the encoded message by selecting cognate aminoacyl-transfer RNA (tRNA) molecules. The large subunit (LSU) contains the ribosomal catalytic site termed the peptidyl transferase center (PTC), which catalyzes the formation of peptide bonds, thereby polymerizing the amino acids delivered by tRNAs into a polypeptide chain. The nascent polypeptides leave the ribosome through a tunnel in the LSU and interact with protein factors that function in enzymatic processing, targeting, and the membrane insertion of nascent chains at the exit of the ribosomal tunnel. This is Large ribosomal subunit protein uL11 (RPL12) from Candida albicans (strain SC5314 / ATCC MYA-2876) (Yeast).